Here is a 423-residue protein sequence, read N- to C-terminus: Ferrochelatase, mitochondrial (423 aa).

A mitochondrion-targeting transit peptide spans 1 to 54 (MRSLGANMAAALRAAGVLLRDPLASSSWRVCQPWRWKSGAAAAAVTTETAQHAQ). K57 is modified (N6-acetyllysine). Residues R115, Y123, and S130 each contribute to the protoporphyrin IX site. An N6-succinyllysine modification is found at K138. A [2Fe-2S] cluster-binding site is contributed by C196. Catalysis depends on residues H230 and D383. Residues C403, C406, and C411 each contribute to the [2Fe-2S] cluster site. The residue at position 415 (K415) is an N6-acetyllysine; alternate. K415 is modified (N6-succinyllysine; alternate).

It belongs to the ferrochelatase family. Homodimer. Homotetramer. Interacts with PGRMC1; the interaction results in decreased FECH activity. Interacts with ABCB10 and SLC25A37; this interaction forms an oligomeric complex. Forms a complex with ABCB7 and ABCB10, where a dimeric FECH bridges ABCB7 and ABCB10 homodimers; this complex may be required for cellular iron homeostasis, mitochondrial function and heme biosynthesis. Interacts with ABCB7 and ABCB10. Requires [2Fe-2S] cluster as cofactor.

Its subcellular location is the mitochondrion inner membrane. It carries out the reaction heme b + 2 H(+) = protoporphyrin IX + Fe(2+). It participates in porphyrin-containing compound metabolism; protoheme biosynthesis; protoheme from protoporphyrin-IX: step 1/1. With respect to regulation, inhibited by nitric oxide (NO). The 2Fe-2S cluster could act as a NO sensor. Catalyzes the ferrous insertion into protoporphyrin IX and participates in the terminal step in the heme biosynthetic pathway. In Homo sapiens (Human), this protein is Ferrochelatase, mitochondrial.